A 146-amino-acid polypeptide reads, in one-letter code: Hemoglobin subunit beta-A/B (146 aa).

Glycine 1 bears the N-acetylserine; in variant beta-B mark. The Globin domain maps to 2–146 (FLTAEEKGLV…VANALAHKYH (145 aa)). Serine 44 carries the phosphoserine modification. Lysine 59 carries the N6-acetyllysine modification. Histidine 63 serves as a coordination point for heme b. Lysine 82 carries the post-translational modification N6-acetyllysine. Residue histidine 92 participates in heme b binding. At cysteine 93 the chain carries S-nitrosocysteine. The residue at position 144 (lysine 144) is an N6-acetyllysine.

It belongs to the globin family. In terms of assembly, heterotetramer of two alpha chains and two beta chains. Red blood cells.

Its function is as follows. Involved in oxygen transport from the lung to the various peripheral tissues. The sequence is that of Hemoglobin subunit beta-A/B (HBB) from Felis catus (Cat).